Here is a 300-residue protein sequence, read N- to C-terminus: MLDLYPVHNFTVEQLEYEKNTRVLQPVWDWIKNGNEHILSSPLFPPFYALSIDYTWVAVFTFIDLFLYDVPFFKNAKIQKDRVVTWDLMKKSLKLQGWNQLLWIYPMALVQLIWVPDTELPILAPTVFEMVSQLAIFFLAFDFTYFWFHYFNHKIKWLYRWCHSVHHMYSSPFAASAQHLHPFELFFVATFITTVPWIFPTHCLTYWLWFFVAQSVSYEVHIGYDFPFALHRIFWFYSGAPAHDMHHLRPLTCFQPWFNYLDRLMGYHITYEDLKKMTEAKFKKFGLYSVEDEKGLIKIN.

An N-linked (GlcNAc...) asparagine glycan is attached at Asn-9. Transmembrane regions (helical) follow at residues 43-63, 95-115, and 130-152; these read LFPP…FTFI, LQGW…LIWV, and MVSQ…HYFN. The region spanning 135–266 is the Fatty acid hydroxylase domain; that stretch reads AIFFLAFDFT…WFNYLDRLMG (132 aa). A Histidine box-1 motif is present at residues 148-152; sequence FHYFN. Positions 163–167 match the Histidine box-2 motif; the sequence is HSVHH. A helical transmembrane segment spans residues 180–200; that stretch reads LHPFELFFVATFITTVPWIFP. The Histidine box-3 signature appears at 242–248; it reads AHDMHHL.

It belongs to the sterol desaturase family. Requires Fe cation as cofactor.

The protein resides in the membrane. Probable sterol desaturase. This Caenorhabditis briggsae protein is Cholesterol 25-hydroxylase-like protein.